The following is an 83-amino-acid chain: Large ribosomal subunit protein bL31B (83 aa).

It belongs to the bacterial ribosomal protein bL31 family. Type B subfamily. In terms of assembly, part of the 50S ribosomal subunit.

This Leifsonia xyli subsp. xyli (strain CTCB07) protein is Large ribosomal subunit protein bL31B.